The primary structure comprises 142 residues: Midkine (142 aa).

The signal sequence occupies residues 1-21 (MELRAFCVILLITFLAVSSQA). Disulfide bonds link Cys36/Cys60, Cys44/Cys69, Cys51/Cys73, Cys83/Cys115, and Cys93/Cys125.

It belongs to the pleiotrophin family.

The protein resides in the secreted. Secreted protein that functions as a cytokine and growth factor and mediates its signal through cell-surface proteoglycan and non-proteoglycan receptors. Binds cell-surface proteoglycan receptors via their chondroitin sulfate (CS) groups. Thereby regulates many processes like inflammatory response, cell proliferation, cell adhesion, cell growth, cell survival, tissue regeneration, cell differentiation and cell migration. Inhibits mesoderm formation and promotes neural formation during development. Plays a role in development of the neuromuscular junction (NMJ). Has antibacterial activity against both Gram-positive and Gram-negative bacteria. In Xenopus tropicalis (Western clawed frog), this protein is Midkine.